The following is a 274-amino-acid chain: Prothoracicostatic peptide (274 aa).

Residues 1–19 form the signal peptide; it reads MRWCLFALWVFGVATVVTA. A propeptide spanning residues 20–67 is cleaved from the precursor; it reads AEEPHHDAAPQTDNEVDLTEDDKRAWSSLHSGWAKRAWQDMSSAWGKR. W76 is subject to Tryptophan amide. Positions 77–91 are excised as a propeptide; sequence GKRGWQDLNSAWGKR. A Tryptophan amide modification is found at W100. Residues 101–136 constitute a propeptide that is removed on maturation; that stretch reads GKRGWQDLNSAWGKRDDDEAMEKKSWQDLNSVWGKR. W145 carries the tryptophan amide modification. Positions 146 to 148 are excised as a propeptide; sequence GKR. W157 carries the post-translational modification Tryptophan amide. Residues 158–172 constitute a propeptide that is removed on maturation; the sequence is GKRGWNDISSVWGKR. W181 bears the Tryptophan amide mark. Positions 182–274 are excised as a propeptide; the sequence is GKRAWQDMSS…NEHSATTNEA (93 aa).

Its subcellular location is the secreted. In terms of biological role, inhibits ecdysteroid biosynthesis in the prothoracic gland of fifth instar larvae, with maximum inhibition during the spinning stage. When administered to day 8 fifth instar larvae it produces a significant delay in the commencement spinning behavior. This is Prothoracicostatic peptide from Bombyx mori (Silk moth).